Consider the following 332-residue polypeptide: L-lactate dehydrogenase A chain (332 aa).

Ala2 bears the N-acetylalanine mark. Residue Lys5 is modified to N6-acetyllysine; alternate. An N6-succinyllysine; alternate modification is found at Lys5. Lys14 carries the post-translational modification N6-acetyllysine. Residue 29–57 coordinates NAD(+); sequence GAVGMACAISILMKDLADELALVDVMEDK. Lys57 is subject to N6-acetyllysine; alternate. Lys57 participates in a covalent cross-link: Glycyl lysine isopeptide (Lys-Gly) (interchain with G-Cter in SUMO2); alternate. At Lys81 the chain carries N6-acetyllysine. Arg99 serves as a coordination point for NAD(+). Arg106 is a substrate binding site. The residue at position 118 (Lys118) is an N6-acetyllysine; alternate. Lys118 is subject to N6-succinyllysine; alternate. At Lys126 the chain carries N6-acetyllysine. NAD(+) is bound at residue Asn138. Asn138 and Arg169 together coordinate substrate. His193 serves as the catalytic Proton acceptor. N6-acetyllysine is present on residues Lys224 and Lys232. Tyr239 carries the phosphotyrosine modification. The residue at position 243 (Lys243) is an N6-acetyllysine. Thr248 provides a ligand contact to substrate. Thr309 carries the phosphothreonine modification. Lys318 carries the N6-acetyllysine; alternate modification. N6-succinyllysine; alternate is present on Lys318. Thr322 is subject to Phosphothreonine.

This sequence belongs to the LDH/MDH superfamily. LDH family. In terms of assembly, homotetramer. Interacts with PTEN upstream reading frame protein MP31. Post-translationally, ISGylated.

It is found in the cytoplasm. The enzyme catalyses (S)-lactate + NAD(+) = pyruvate + NADH + H(+). It participates in fermentation; pyruvate fermentation to lactate; (S)-lactate from pyruvate: step 1/1. In terms of biological role, interconverts simultaneously and stereospecifically pyruvate and lactate with concomitant interconversion of NADH and NAD(+). This is L-lactate dehydrogenase A chain (Ldha) from Mus musculus (Mouse).